A 630-amino-acid polypeptide reads, in one-letter code: 1-deoxy-D-xylulose-5-phosphate synthase (630 aa).

Thiamine diphosphate-binding positions include His72 and 113–115 (GHS). Residue Asp144 coordinates Mg(2+). Residues 145–146 (GA), Asn173, Tyr284, and Glu367 contribute to the thiamine diphosphate site. Asn173 is a Mg(2+) binding site.

Belongs to the transketolase family. DXPS subfamily. In terms of assembly, homodimer. The cofactor is Mg(2+). It depends on thiamine diphosphate as a cofactor.

The catalysed reaction is D-glyceraldehyde 3-phosphate + pyruvate + H(+) = 1-deoxy-D-xylulose 5-phosphate + CO2. The protein operates within metabolic intermediate biosynthesis; 1-deoxy-D-xylulose 5-phosphate biosynthesis; 1-deoxy-D-xylulose 5-phosphate from D-glyceraldehyde 3-phosphate and pyruvate: step 1/1. In terms of biological role, catalyzes the acyloin condensation reaction between C atoms 2 and 3 of pyruvate and glyceraldehyde 3-phosphate to yield 1-deoxy-D-xylulose-5-phosphate (DXP). This is 1-deoxy-D-xylulose-5-phosphate synthase from Bacillus cytotoxicus (strain DSM 22905 / CIP 110041 / 391-98 / NVH 391-98).